The primary structure comprises 241 residues: Uridylate kinase (241 aa).

14–17 (KLSG) serves as a coordination point for ATP. Residues 22–27 (GNQGFG) are involved in allosteric activation by GTP. Position 56 (G56) interacts with UMP. Residues G57 and R61 each contribute to the ATP site. UMP-binding positions include D76 and 137–144 (TGNPYFTT). ATP-binding residues include T164, Y170, and D173.

It belongs to the UMP kinase family. As to quaternary structure, homohexamer.

Its subcellular location is the cytoplasm. The enzyme catalyses UMP + ATP = UDP + ADP. Its pathway is pyrimidine metabolism; CTP biosynthesis via de novo pathway; UDP from UMP (UMPK route): step 1/1. Allosterically activated by GTP. Inhibited by UTP. In terms of biological role, catalyzes the reversible phosphorylation of UMP to UDP. This Syntrophotalea carbinolica (strain DSM 2380 / NBRC 103641 / GraBd1) (Pelobacter carbinolicus) protein is Uridylate kinase.